The primary structure comprises 362 residues: Alanine racemase (362 aa).

Residue Lys-33 is the Proton acceptor; specific for D-alanine of the active site. Lys-33 carries the N6-(pyridoxal phosphate)lysine modification. Arg-129 serves as a coordination point for substrate. Tyr-254 acts as the Proton acceptor; specific for L-alanine in catalysis. Met-302 contacts substrate.

It belongs to the alanine racemase family. Requires pyridoxal 5'-phosphate as cofactor.

The enzyme catalyses L-alanine = D-alanine. Its pathway is amino-acid biosynthesis; D-alanine biosynthesis; D-alanine from L-alanine: step 1/1. Catalyzes the interconversion of L-alanine and D-alanine. May also act on other amino acids. The sequence is that of Alanine racemase (alr) from Xylella fastidiosa (strain 9a5c).